We begin with the raw amino-acid sequence, 222 residues long: Peptide methionine sulfoxide reductase MsrA 2 (222 aa).

C56 is an active-site residue.

The protein belongs to the MsrA Met sulfoxide reductase family.

It carries out the reaction L-methionyl-[protein] + [thioredoxin]-disulfide + H2O = L-methionyl-(S)-S-oxide-[protein] + [thioredoxin]-dithiol. It catalyses the reaction [thioredoxin]-disulfide + L-methionine + H2O = L-methionine (S)-S-oxide + [thioredoxin]-dithiol. Functionally, has an important function as a repair enzyme for proteins that have been inactivated by oxidation. Catalyzes the reversible oxidation-reduction of methionine sulfoxide in proteins to methionine. In Nostoc sp. (strain PCC 7120 / SAG 25.82 / UTEX 2576), this protein is Peptide methionine sulfoxide reductase MsrA 2 (msrA2).